We begin with the raw amino-acid sequence, 369 residues long: Signal recognition particle receptor FtsY (369 aa).

Over residues 20-42 (GEENKKEPETRQTDQLESKKEET) the composition is skewed to basic and acidic residues. Positions 20 to 58 (GEENKKEPETRQTDQLESKKEETIQQQQNVQQPQAENKI) are disordered. Positions 44–53 (QQQQNVQQPQ) are enriched in low complexity. GTP is bound by residues 180–187 (GVNGVGKT), 262–266 (DTAGR), and 320–323 (TKVD).

Belongs to the GTP-binding SRP family. FtsY subfamily. Part of the signal recognition particle protein translocation system, which is composed of SRP and FtsY.

Its subcellular location is the cell membrane. The protein localises to the cytoplasm. It catalyses the reaction GTP + H2O = GDP + phosphate + H(+). In terms of biological role, involved in targeting and insertion of nascent membrane proteins into the cytoplasmic membrane. Acts as a receptor for the complex formed by the signal recognition particle (SRP) and the ribosome-nascent chain (RNC). This Sulfolobus acidocaldarius (strain ATCC 33909 / DSM 639 / JCM 8929 / NBRC 15157 / NCIMB 11770) protein is Signal recognition particle receptor FtsY.